The following is a 332-amino-acid chain: 2-hydroxyacid dehydrogenase homolog 1 (332 aa).

NAD(+)-binding positions include 154-155 (RI), 233-235 (TSR), and aspartate 259. Arginine 235 is a catalytic residue. Glutamate 264 is an active-site residue. Histidine 296 acts as the Proton donor in catalysis. 296–299 (HQAF) provides a ligand contact to NAD(+).

This sequence belongs to the D-isomer specific 2-hydroxyacid dehydrogenase family.

It localises to the cytoplasm. The protein resides in the nucleus. The chain is 2-hydroxyacid dehydrogenase homolog 1 from Schizosaccharomyces pombe (strain 972 / ATCC 24843) (Fission yeast).